The sequence spans 209 residues: MASMGLQVMGIALAVLGWLAVMLCCALPMWRVTAFIGSNIVTSQTIWEGLWMNCVVQSTGQMQCKVYDSLLALPQDLQAARALVIISIIVAALGVLLSVVGGKCTNCLEDESAKAKTMIVAGVVFLLAGLMVIVPVSWTAHNIIQDFYNPLVASGQKREMGASLYVGWAASGLLLLGGGLLCCNCPPRTDKPYSAKYSAARSAAASNYV.

The Cytoplasmic portion of the chain corresponds to 1–7; sequence MASMGLQ. Residues 1-103 form an interaction with EPHA2 region; it reads MASMGLQVMG…GVLLSVVGGK (103 aa). A helical membrane pass occupies residues 8–28; that stretch reads VMGIALAVLGWLAVMLCCALP. The Extracellular portion of the chain corresponds to 29-81; the sequence is MWRVTAFIGSNIVTSQTIWEGLWMNCVVQSTGQMQCKVYDSLLALPQDLQAAR. An intrachain disulfide couples cysteine 54 to cysteine 64. A helical membrane pass occupies residues 82–102; the sequence is ALVIISIIVAALGVLLSVVGG. At 103–117 the chain is on the cytoplasmic side; the sequence is KCTNCLEDESAKAKT. Residues 118–138 traverse the membrane as a helical segment; sequence MIVAGVVFLLAGLMVIVPVSW. Topologically, residues 139-160 are extracellular; that stretch reads TAHNIIQDFYNPLVASGQKREM. The helical transmembrane segment at 161-181 threads the bilayer; sequence GASLYVGWAASGLLLLGGGLL. Residues 182–209 are Cytoplasmic-facing; it reads CCNCPPRTDKPYSAKYSAARSAAASNYV. Tyrosine 208 carries the phosphotyrosine; by EPHA2 modification. The tract at residues 208-209 is interactions with TJP1, TJP2 and TJP3; sequence YV.

This sequence belongs to the claudin family. As to quaternary structure, can form heteropolymeric strands with other claudins. Interacts with CLDN8. Interacts with CLDN1. Directly interacts with TJP1/ZO-1. Interacts with TJP2/ZO-2 and TJP3/ZO-3. Interacts with EPHA2; phosphorylates CLDN4 and may regulate tight junctions. (Microbial infection) Interacts (via both extracellular domains) with Clostridium perfringens enterotoxin CPE; the interaction may disrupt claudin assembly in tight junctions. In terms of processing, phosphorylated. Phosphorylation by EPHA2 is stimulated by EFNA1 and alters interaction with TJP1.

Its subcellular location is the cell junction. The protein localises to the tight junction. The protein resides in the cell membrane. It catalyses the reaction chloride(in) = chloride(out). The enzyme catalyses bromide(in) = bromide(out). It carries out the reaction iodide(out) = iodide(in). The catalysed reaction is fluoride(in) = fluoride(out). Functionally, can associate with other claudins to regulate tight junction structural and functional strand dynamics. May coassemble with CLDN8 into tight junction strands containing anion-selective channels that convey paracellular chloride permeability in renal collecting ducts. May integrate into CLDN3 strands to modulate localized tight junction barrier properties. May disrupt strand assembly of channel-forming CLDN2 and CLDN15 and inhibit cation conductance. Cannot form tight junction strands on its own. This Homo sapiens (Human) protein is Claudin-4.